The following is a 259-amino-acid chain: GTP cyclohydrolase FolE2 (259 aa).

This sequence belongs to the GTP cyclohydrolase IV family.

The enzyme catalyses GTP + H2O = 7,8-dihydroneopterin 3'-triphosphate + formate + H(+). Its pathway is cofactor biosynthesis; 7,8-dihydroneopterin triphosphate biosynthesis; 7,8-dihydroneopterin triphosphate from GTP: step 1/1. Functionally, converts GTP to 7,8-dihydroneopterin triphosphate. The protein is GTP cyclohydrolase FolE2 of Nitratidesulfovibrio vulgaris (strain DSM 19637 / Miyazaki F) (Desulfovibrio vulgaris).